Here is a 468-residue protein sequence, read N- to C-terminus: UDP-N-acetylmuramate--L-alanine ligase (468 aa).

Residue 121-127 (GSHGKTT) participates in ATP binding.

It belongs to the MurCDEF family.

It is found in the cytoplasm. The catalysed reaction is UDP-N-acetyl-alpha-D-muramate + L-alanine + ATP = UDP-N-acetyl-alpha-D-muramoyl-L-alanine + ADP + phosphate + H(+). It functions in the pathway cell wall biogenesis; peptidoglycan biosynthesis. In terms of biological role, cell wall formation. This Borreliella afzelii (strain PKo) (Borrelia afzelii) protein is UDP-N-acetylmuramate--L-alanine ligase.